Here is a 319-residue protein sequence, read N- to C-terminus: Annexin A5 (319 aa).

At A2 the chain carries N-acetylalanine. Annexin repeat units follow at residues 13–84, 85–156, 168–240, and 244–315; these read FDGR…AMMK, PSRL…VLLQ, AQVE…AVVK, and SIPA…LLCG. Residue K27 forms a Glycyl lysine isopeptide (Lys-Gly) (interchain with G-Cter in SUMO1); alternate linkage. K27 participates in a covalent cross-link: Glycyl lysine isopeptide (Lys-Gly) (interchain with G-Cter in SUMO2); alternate. The residue at position 35 (S35) is a Phosphoserine. N6-acetyllysine is present on residues K68, K74, K77, K95, and K99. K288 is modified (N6-succinyllysine). The short motif at 312 to 318 is the [IL]-x-C-x-x-[DE] motif element; sequence LLCGGED.

The protein belongs to the annexin family. Monomer. Binds ATRX and EIF5B. S-nitrosylation is induced by interferon-gamma and oxidatively-modified low-densitity lipoprotein (LDL(ox)) possibly implicating the iNOS-S100A8/9 transnitrosylase complex.

This protein is an anticoagulant protein that acts as an indirect inhibitor of the thromboplastin-specific complex, which is involved in the blood coagulation cascade. This Mus musculus (Mouse) protein is Annexin A5 (Anxa5).